A 436-amino-acid polypeptide reads, in one-letter code: MKKLLLASIIGLASTTSFASGSTTPVISSSDSEIKLEGFYLFESGFSNQNRLGEFENLSDNRKKTAFYTEAAFAATITKTINDVIGGVKIVLQPTTRSKTSTSYNGSHIFIETSYGKVELGSPYDAGNKLRITGGQVAAGSGGYLRYINVGSKYMQYEKLKPDFDTSPSFYIESFSNNFDEFNVKAEAARKISFYTPKMKGFQAGISYTPDSANTGGNKNINNVVFDDSITGITNVRTGIKRNIVENDEIITINQNVTDSISGGLTYEHALGEDADLKLSVTGEYGKPARLAVRSKVIDKTYTVLDTYKLSNLKAYNLGAVFTYGNFSCGASYGSLGKSLTTPQYHKNGRNTYYYNGAIAYGQGPIKTSLSYFKSSRYKNTVDTITVATEYKIMPGLLPYAEISHFQAKGKPVYYPEAPNKKTKGTVGLIGTKLKF.

An N-terminal signal peptide occupies residues 1–19 (MKKLLLASIIGLASTTSFA).

This is an uncharacterized protein from Rickettsia bellii (strain RML369-C).